The sequence spans 170 residues: MAQIRIHEVNTRIENEVEVSKFLQEEGVLYEKWNISKLPTHLNENYSLTDENKAEILAIFSKEIADVSARRGYKAHDVISLSSSTPNLDELLINFQKEHHHTDDEVRFIVSGHGIFAIEGKDGKFFDVELEPGDLISVPENARHYFTLQDDRQVVAIRIFVTTEGWVPIY.

Positions 99, 101, 105, and 144 each coordinate Fe(2+). 4 residues coordinate Ni(2+): H99, H101, E105, and H144.

The protein belongs to the acireductone dioxygenase (ARD) family. As to quaternary structure, monomer. Fe(2+) serves as cofactor. Ni(2+) is required as a cofactor.

It carries out the reaction 1,2-dihydroxy-5-(methylsulfanyl)pent-1-en-3-one + O2 = 3-(methylsulfanyl)propanoate + CO + formate + 2 H(+). It catalyses the reaction 1,2-dihydroxy-5-(methylsulfanyl)pent-1-en-3-one + O2 = 4-methylsulfanyl-2-oxobutanoate + formate + 2 H(+). The protein operates within amino-acid biosynthesis; L-methionine biosynthesis via salvage pathway; L-methionine from S-methyl-5-thio-alpha-D-ribose 1-phosphate: step 5/6. Its function is as follows. Catalyzes 2 different reactions between oxygen and the acireductone 1,2-dihydroxy-3-keto-5-methylthiopentene (DHK-MTPene) depending upon the metal bound in the active site. Fe-containing acireductone dioxygenase (Fe-ARD) produces formate and 2-keto-4-methylthiobutyrate (KMTB), the alpha-ketoacid precursor of methionine in the methionine recycle pathway. Ni-containing acireductone dioxygenase (Ni-ARD) produces methylthiopropionate, carbon monoxide and formate, and does not lie on the methionine recycle pathway. This Bacillus cereus (strain ATCC 14579 / DSM 31 / CCUG 7414 / JCM 2152 / NBRC 15305 / NCIMB 9373 / NCTC 2599 / NRRL B-3711) protein is Acireductone dioxygenase.